A 306-amino-acid chain; its full sequence is D-alanine--D-alanine ligase (306 aa).

An ATP-grasp domain is found at 101-301 (KKILAHAGLP…FPDLVEHLVR (201 aa)). 129 to 185 (VAELGLPVVVKAPTQGSSIGVYIVEREEDLEARITDAVAYGGTRVLVEKFIAGPELT) provides a ligand contact to ATP. Aspartate 256, glutamate 268, and asparagine 270 together coordinate Mg(2+).

The protein belongs to the D-alanine--D-alanine ligase family. Mg(2+) serves as cofactor. Mn(2+) is required as a cofactor.

The protein localises to the cytoplasm. The catalysed reaction is 2 D-alanine + ATP = D-alanyl-D-alanine + ADP + phosphate + H(+). It participates in cell wall biogenesis; peptidoglycan biosynthesis. In terms of biological role, cell wall formation. This chain is D-alanine--D-alanine ligase, found in Desulforudis audaxviator (strain MP104C).